Consider the following 138-residue polypeptide: uncharacterized protein (138 aa).

Disordered stretches follow at residues Met-1–Glu-23 and Ala-35–Val-83. Over residues Asp-60–Asp-69 the composition is skewed to acidic residues.

This is an uncharacterized protein from Schizosaccharomyces pombe (strain 972 / ATCC 24843) (Fission yeast).